A 493-amino-acid polypeptide reads, in one-letter code: Neuronal acetylcholine receptor subunit alpha-6 (493 aa).

Positions 1-30 (MLNGWGRGDLRSGLCLWICGFLAFFKGSRG) are cleaved as a signal peptide. Topologically, residues 31-240 (CVSEEQLFHT…TYSFYIRRLP (210 aa)) are extracellular. N-linked (GlcNAc...) asparagine glycosylation is found at N54 and N171. 2 disulfide bridges follow: C158–C172 and C222–C223. A run of 3 helical transmembrane segments spans residues 241–265 (MFYT…FYLP), 272–290 (VTLC…LVIT), and 306–327 (YLLF…VLNI). Residues 328-464 (HYRTPATHTM…WKYMAMVVDR (137 aa)) are Cytoplasmic-facing. A Phosphoserine modification is found at S401. Residues 465 to 484 (VFLWVFIIVCVFGTVGLFLQ) form a helical membrane-spanning segment.

This sequence belongs to the ligand-gated ion channel (TC 1.A.9) family. Acetylcholine receptor (TC 1.A.9.1) subfamily. Alpha-6/CHRNA6 sub-subfamily. Neuronal AChR is composed of two different types of subunits: alpha and non-alpha (beta). CHRNA6/alpha-6 subunit can be combined to CHRNB2/beta-2 and CHRNA4/alpha-4 to give rise to functional receptors. Interacts with LYPD6. Predominantly expressed in only a few brain areas, including dopaminergic neurons, norepirephrine neurons and cells of the visual system.

It is found in the synaptic cell membrane. It catalyses the reaction Ca(2+)(in) = Ca(2+)(out). The enzyme catalyses K(+)(in) = K(+)(out). It carries out the reaction Na(+)(in) = Na(+)(out). With respect to regulation, activated by a myriad of ligands such as acetylcholine, cytisine and nicotine. CHRNA6 nAChR activity is inhibited by the antagonists alpha-conotoxin MII and PIA, a small disulfide-constrained peptides from cone snails. Functionally, component of neuronal acetylcholine receptors (nAChRs) that function as pentameric, ligand-gated cation channels with high calcium permeability among other activities. nAChRs are excitatory neurotrasnmitter receptors formed by a collection of nAChR subunits known to mediate synaptic transmission in the nervous system and the neuromuscular junction. Each nAchR subunit confers differential attributes to channel properties, including activation, deactivation and desensitization kinetics, pH sensitivity, cation permeability, and binding to allosteric modulators. CHRNA6 forms pentameric channels with CHRNB2 and CHRNA4 that exhibit high sensitivity to ACh and nicotine and are predominantly expressed in only a few brain areas, including dopaminergic neurons, norepirephrine neurons and cells of the visual system. nAChrs containing CHRNA6 subunits mediate endogenous cholinergic modulation of dopamine and gamma-aminobutyric acid (GABA) release in response to nicotine at nerve terminals. This Rattus norvegicus (Rat) protein is Neuronal acetylcholine receptor subunit alpha-6 (Chrna6).